Reading from the N-terminus, the 316-residue chain is Methionyl-tRNA formyltransferase (316 aa).

114–117 (SLLP) contacts (6S)-5,6,7,8-tetrahydrofolate.

The protein belongs to the Fmt family.

The catalysed reaction is L-methionyl-tRNA(fMet) + (6R)-10-formyltetrahydrofolate = N-formyl-L-methionyl-tRNA(fMet) + (6S)-5,6,7,8-tetrahydrofolate + H(+). Its function is as follows. Attaches a formyl group to the free amino group of methionyl-tRNA(fMet). The formyl group appears to play a dual role in the initiator identity of N-formylmethionyl-tRNA by promoting its recognition by IF2 and preventing the misappropriation of this tRNA by the elongation apparatus. The polypeptide is Methionyl-tRNA formyltransferase (Aromatoleum aromaticum (strain DSM 19018 / LMG 30748 / EbN1) (Azoarcus sp. (strain EbN1))).